Here is a 370-residue protein sequence, read N- to C-terminus: Doublesex- and mab-3-related transcription factor C2 (370 aa).

Positions 1 to 38 are disordered; that stretch reads MDPSETAALHHCSADSSPADEARVPQSTELIPRRPVSR. The segment at residues 42-89 is a DNA-binding region (DM); it reads CARCRNHGVTAHLKGHKRLCLFQACECHKCVLILERRRVMAAQVALRR. Residues 334-356 are disordered; that stretch reads APPGGRGFQPVGPPLRPSPGSSV.

The protein belongs to the DMRT family. As to expression, expressed in testis. Highly expressed in ovary.

The protein resides in the nucleus. Functionally, may be involved in sexual development. The protein is Doublesex- and mab-3-related transcription factor C2 (Dmrtc2) of Mus musculus (Mouse).